Consider the following 302-residue polypeptide: tRNA pseudouridine synthase B (302 aa).

The active-site Nucleophile is D43.

Belongs to the pseudouridine synthase TruB family. Type 1 subfamily.

It catalyses the reaction uridine(55) in tRNA = pseudouridine(55) in tRNA. Responsible for synthesis of pseudouridine from uracil-55 in the psi GC loop of transfer RNAs. The chain is tRNA pseudouridine synthase B from Burkholderia mallei (strain NCTC 10247).